The following is a 364-amino-acid chain: MTKAPQDTRVIVGMSGGVDSSVAAARLIDAGYQVEGLFMKNWNEDDGTDYCTAREDLLDAMQVAGVLGIELHTANFAEQYWDRVFAHFLAEYKAGRTPNPDILCNKEIKFQAFLDHAITLGADYIATGHYSQVSHTGKAKLLRAVDTNKDQTYFLHAVDYQKFDRTLFPLGDLEKPEVRRIAEQKGFDNHKKKDSTGICFIGERRFKDFLEQYLPAQPGSIEDDHGNVIGQHDGLMYYTLGQRQGLGIGGLASASEAPWYVAKKDLERNVLIAVQGTDHPLLYSRVLNSAPMQWVALEAPALPARLTAKTRYRQPDQGCTVSDAGEGRVTVTFDEPQRAVTPGQSVVFYDGPVCLGGAVIEETA.

Residues G13–S20 and M39 contribute to the ATP site. The tract at residues N99 to D101 is interaction with target base in tRNA. C104 functions as the Nucleophile in the catalytic mechanism. C104 and C199 are oxidised to a cystine. G128 contacts ATP. Residues K149 to Q151 are interaction with tRNA. C199 (cysteine persulfide intermediate) is an active-site residue. Positions R311–Y312 are interaction with tRNA.

The protein belongs to the MnmA/TRMU family.

It is found in the cytoplasm. The enzyme catalyses S-sulfanyl-L-cysteinyl-[protein] + uridine(34) in tRNA + AH2 + ATP = 2-thiouridine(34) in tRNA + L-cysteinyl-[protein] + A + AMP + diphosphate + H(+). In terms of biological role, catalyzes the 2-thiolation of uridine at the wobble position (U34) of tRNA, leading to the formation of s(2)U34. The sequence is that of tRNA-specific 2-thiouridylase MnmA from Alcanivorax borkumensis (strain ATCC 700651 / DSM 11573 / NCIMB 13689 / SK2).